Consider the following 503-residue polypeptide: Efflux pump vrtL (503 aa).

The segment at 1 to 59 is disordered; the sequence is MSKLSDNHSSASEGEKEAGDLESGPTAISSEPSFDDADRDPNLITWDGPKDPENPKNWP. An N-linked (GlcNAc...) asparagine glycan is attached at Asn7. 12 helical membrane passes run 68-88, 101-121, 133-153, 162-182, 194-214, 221-241, 295-315, 329-349, 377-397, 401-421, 432-454, and 471-491; these read WTVS…APAM, IEIY…PIFF, LLQI…FATT, FLAG…ISDM, VYTL…GFIA, WVFW…FFWL, IVFC…LMFA, PGIG…GLFF, SLAV…WSIG, WIMP…CLQG, TYAA…GFPL, and LLAF…WHFG.

Belongs to the major facilitator superfamily.

The protein localises to the membrane. Its function is as follows. Efflux pump; part of the gene cluster that mediates the biosynthesis of viridicatumtoxin, a tetracycline-like fungal meroterpenoid with a unique, fused spirobicyclic ring system. In Penicillium aethiopicum, this protein is Efflux pump vrtL.